A 410-amino-acid polypeptide reads, in one-letter code: Arginine biosynthesis bifunctional protein ArgJ (410 aa).

Residues Thr158, Lys184, Thr195, Glu282, Asn405, and Thr410 each contribute to the substrate site. The active-site Nucleophile is the Thr195.

This sequence belongs to the ArgJ family. In terms of assembly, heterotetramer of two alpha and two beta chains.

The protein localises to the cytoplasm. The catalysed reaction is N(2)-acetyl-L-ornithine + L-glutamate = N-acetyl-L-glutamate + L-ornithine. It catalyses the reaction L-glutamate + acetyl-CoA = N-acetyl-L-glutamate + CoA + H(+). It functions in the pathway amino-acid biosynthesis; L-arginine biosynthesis; L-ornithine and N-acetyl-L-glutamate from L-glutamate and N(2)-acetyl-L-ornithine (cyclic): step 1/1. The protein operates within amino-acid biosynthesis; L-arginine biosynthesis; N(2)-acetyl-L-ornithine from L-glutamate: step 1/4. Catalyzes two activities which are involved in the cyclic version of arginine biosynthesis: the synthesis of N-acetylglutamate from glutamate and acetyl-CoA as the acetyl donor, and of ornithine by transacetylation between N(2)-acetylornithine and glutamate. This Rhodopirellula baltica (strain DSM 10527 / NCIMB 13988 / SH1) protein is Arginine biosynthesis bifunctional protein ArgJ.